Here is a 416-residue protein sequence, read N- to C-terminus: METSSPWPPRPSPSAGLSLEARLGVDTRLWAKVLFTALYSLIFAFGTAGNALSVHVVLKARAGRPGRLRYHVLSLALSALLLLLVSMPMELYNFVWSHYPWVFGDLGCRGYYFVRELCAYATVLSVASLSAERCLAVCQPLRARRLLTPRRTRRLLSLVWVASLGLALPMAVIMGQKHEVESADGEPEPASRVCTVLVSRATLQVFIQVNVLVSFALPLALTAFLNGITVNHLMALYSQVPSASAQVSSIPSRLELLSEEGLLGFITWRKTLSLGVQASLVRHKDASQIRSLQHSAQVLRAIVAVYVICWLPYHARRLMYCYIPDDGWTNELYDFYHYFYMVTNTLFYVSSAVTPILYNAVSSSFRKLFLESLGSLCGEQHSLVPLPQEAPESTTSTYSFRLWGSPRNPSLGEIQV.

Residues 1-32 (METSSPWPPRPSPSAGLSLEARLGVDTRLWAK) are Extracellular-facing. The chain crosses the membrane as a helical span at residues 33 to 55 (VLFTALYSLIFAFGTAGNALSVH). Residues 56-64 (VVLKARAGR) are Cytoplasmic-facing. The chain crosses the membrane as a helical span at residues 65-87 (PGRLRYHVLSLALSALLLLLVSM). The Extracellular segment spans residues 88-109 (PMELYNFVWSHYPWVFGDLGCR). Cys108 and Cys194 are joined by a disulfide. Residues 110-131 (GYYFVRELCAYATVLSVASLSA) form a helical membrane-spanning segment. The Cytoplasmic segment spans residues 132–154 (ERCLAVCQPLRARRLLTPRRTRR). A helical transmembrane segment spans residues 155–176 (LLSLVWVASLGLALPMAVIMGQ). At 177–216 (KHEVESADGEPEPASRVCTVLVSRATLQVFIQVNVLVSFA) the chain is on the extracellular side. Residues 217–237 (LPLALTAFLNGITVNHLMALY) traverse the membrane as a helical segment. At 238-297 (SQVPSASAQVSSIPSRLELLSEEGLLGFITWRKTLSLGVQASLVRHKDASQIRSLQHSAQ) the chain is on the cytoplasmic side. Residues 298–318 (VLRAIVAVYVICWLPYHARRL) form a helical membrane-spanning segment. The Extracellular portion of the chain corresponds to 319 to 337 (MYCYIPDDGWTNELYDFYH). The chain crosses the membrane as a helical span at residues 338 to 358 (YFYMVTNTLFYVSSAVTPILY). Residues 359 to 416 (NAVSSSFRKLFLESLGSLCGEQHSLVPLPQEAPESTTSTYSFRLWGSPRNPSLGEIQV) lie on the Cytoplasmic side of the membrane. Cys377 carries the S-palmitoyl cysteine lipid modification. The residue at position 410 (Ser410) is a Phosphoserine.

This sequence belongs to the G-protein coupled receptor 1 family. Neurotensin receptor subfamily. NTSR2 sub-subfamily. Abundant in cortex and hypothalamus, and lower levels seen in the heart and intestine.

The protein localises to the cell membrane. In terms of biological role, receptor for the tridecapeptide neurotensin. It is associated with G proteins that activate a phosphatidylinositol-calcium second messenger system. In Rattus norvegicus (Rat), this protein is Neurotensin receptor type 2 (Ntsr2).